Consider the following 383-residue polypeptide: Ribosomal RNA large subunit methyltransferase G (383 aa).

It belongs to the methyltransferase superfamily. RlmG family.

The protein localises to the cytoplasm. The enzyme catalyses guanosine(1835) in 23S rRNA + S-adenosyl-L-methionine = N(2)-methylguanosine(1835) in 23S rRNA + S-adenosyl-L-homocysteine + H(+). Functionally, specifically methylates the guanine in position 1835 (m2G1835) of 23S rRNA. The polypeptide is Ribosomal RNA large subunit methyltransferase G (Shewanella denitrificans (strain OS217 / ATCC BAA-1090 / DSM 15013)).